A 577-amino-acid chain; its full sequence is DNA primase (577 aa).

Residues Cys40–Cys64 form a CHC2-type zinc finger. In terms of domain architecture, Toprim spans Val255–Pro337. Mg(2+)-binding residues include Glu261, Asp305, and Asp307.

This sequence belongs to the DnaG primase family. As to quaternary structure, monomer. Interacts with DnaB. It depends on Zn(2+) as a cofactor. Requires Mg(2+) as cofactor.

The catalysed reaction is ssDNA + n NTP = ssDNA/pppN(pN)n-1 hybrid + (n-1) diphosphate.. RNA polymerase that catalyzes the synthesis of short RNA molecules used as primers for DNA polymerase during DNA replication. This Buchnera aphidicola subsp. Acyrthosiphon pisum (strain APS) (Acyrthosiphon pisum symbiotic bacterium) protein is DNA primase.